The chain runs to 323 residues: Peroxisomal and mitochondrial division factor 2 (323 aa).

Disordered regions lie at residues 1–55 (MAEE…NDAI), 73–92 (ESKA…KSDE), and 120–143 (TART…SQKG). The Cytoplasmic segment spans residues 1-297 (MAEERSLNGE…WSPNVTAVGS (297 aa)). Acidic residues predominate over residues 13 to 26 (GQDDESFFDSDQQG). Residues 28–278 (DGKSTELNQK…INGLKNVVEE (251 aa)) are a coiled coil. A helical membrane pass occupies residues 298–318 (GGAVAAVAVAVAGAAVVCYIY). The Mitochondrial intermembrane portion of the chain corresponds to 319 to 323 (HSRRV).

As to quaternary structure, homodimer. Interacts with PMD1.

The protein localises to the mitochondrion outer membrane. In terms of biological role, involved in morphogenesis and proliferation of mitochondria. Does not act redundantly with PMD1. Is not involved in peroxisomal proliferation. The chain is Peroxisomal and mitochondrial division factor 2 from Arabidopsis thaliana (Mouse-ear cress).